Here is a 344-residue protein sequence, read N- to C-terminus: tRNA dimethylallyltransferase (344 aa).

43–50 (GPTCCGKS) contacts ATP. 45–50 (TCCGKS) is a substrate binding site. The interaction with substrate tRNA stretch occupies residues 68–71 (DSMQ).

Belongs to the IPP transferase family. In terms of assembly, monomer. Requires Mg(2+) as cofactor.

It catalyses the reaction adenosine(37) in tRNA + dimethylallyl diphosphate = N(6)-dimethylallyladenosine(37) in tRNA + diphosphate. In terms of biological role, catalyzes the transfer of a dimethylallyl group onto the adenine at position 37 in tRNAs that read codons beginning with uridine, leading to the formation of N6-(dimethylallyl)adenosine (i(6)A). The protein is tRNA dimethylallyltransferase of Protochlamydia amoebophila (strain UWE25).